The chain runs to 150 residues: MKCPFCAFADSKVVDSRPDKGGSTIRRRRECESCGKRFTTHERVEEILPLVIKKDGRREPFDRMKLVAGIQKACEKRPVSVETIERLVDRLEIQMQESGEKEIPSKSLGEWVMAELHSIDQVAYVRFASVYRSFKDITEFMSELQDLLKK.

The segment at 3–34 (CPFCAFADSKVVDSRPDKGGSTIRRRRECESC) is a zinc-finger region. Positions 49-139 (PLVIKKDGRR…VYRSFKDITE (91 aa)) constitute an ATP-cone domain.

This sequence belongs to the NrdR family. Requires Zn(2+) as cofactor.

In terms of biological role, negatively regulates transcription of bacterial ribonucleotide reductase nrd genes and operons by binding to NrdR-boxes. The protein is Transcriptional repressor NrdR of Geotalea uraniireducens (strain Rf4) (Geobacter uraniireducens).